We begin with the raw amino-acid sequence, 167 residues long: MIRKSLLFLLLGLTLTAGLDQAVKYWVMQNMPLGTEIPLIPFLSLYHVRNSGIAFSFFSSFSHWGIIAITIIVIIFLLWLWKNTEDNKFLMRFGLVLIIGGAIGNLIDRIRFHHVTDYILFYIDDIFYFAIFNLADSFITLGVIVILIEELRTWMKAKRDSNHTSSH.

Helical transmembrane passes span 7 to 27 (LFLL…KYWV), 61 to 81 (FSHW…LWLW), and 87 to 107 (NKFL…GNLI). Active-site residues include aspartate 117 and aspartate 136. A helical transmembrane segment spans residues 126 to 146 (IFYFAIFNLADSFITLGVIVI).

The protein belongs to the peptidase A8 family.

The protein localises to the cell inner membrane. The catalysed reaction is Release of signal peptides from bacterial membrane prolipoproteins. Hydrolyzes -Xaa-Yaa-Zaa-|-(S,diacylglyceryl)Cys-, in which Xaa is hydrophobic (preferably Leu), and Yaa (Ala or Ser) and Zaa (Gly or Ala) have small, neutral side chains.. Its pathway is protein modification; lipoprotein biosynthesis (signal peptide cleavage). In terms of biological role, this protein specifically catalyzes the removal of signal peptides from prolipoproteins. This Bartonella tribocorum (strain CIP 105476 / IBS 506) protein is Lipoprotein signal peptidase.